The following is a 215-amino-acid chain: Ependymin (215 aa).

Positions 1–20 (MHTVKLLCVVFSCLCAVAWA) are cleaved as a signal peptide. Asparagine 71 and asparagine 94 each carry an N-linked (GlcNAc...) asparagine glycan.

The protein belongs to the ependymin family. Forms disulfide-linked dimers. Binds calcium through the terminal sialic acids. In terms of tissue distribution, EPDs are synthesized in the meninx and secreted in the cerebrospinal fluid.

It is found in the secreted. Functionally, may play a role in neural plasticity. May be involved during axon regeneration. The protein is Ependymin (epd) of Cyprinus carpio (Common carp).